The following is a 263-amino-acid chain: Hydroxymethylpyrimidine/phosphomethylpyrimidine kinase (263 aa).

A 4-amino-5-hydroxymethyl-2-methylpyrimidine-binding site is contributed by Q44.

Belongs to the ThiD family.

It catalyses the reaction 4-amino-5-hydroxymethyl-2-methylpyrimidine + ATP = 4-amino-2-methyl-5-(phosphooxymethyl)pyrimidine + ADP + H(+). The catalysed reaction is 4-amino-2-methyl-5-(phosphooxymethyl)pyrimidine + ATP = 4-amino-2-methyl-5-(diphosphooxymethyl)pyrimidine + ADP. It functions in the pathway cofactor biosynthesis; thiamine diphosphate biosynthesis; 4-amino-2-methyl-5-diphosphomethylpyrimidine from 5-amino-1-(5-phospho-D-ribosyl)imidazole: step 2/3. It participates in cofactor biosynthesis; thiamine diphosphate biosynthesis; 4-amino-2-methyl-5-diphosphomethylpyrimidine from 5-amino-1-(5-phospho-D-ribosyl)imidazole: step 3/3. Catalyzes the phosphorylation of hydroxymethylpyrimidine phosphate (HMP-P) to HMP-PP, and of HMP to HMP-P. This Synechococcus elongatus (strain ATCC 33912 / PCC 7942 / FACHB-805) (Anacystis nidulans R2) protein is Hydroxymethylpyrimidine/phosphomethylpyrimidine kinase (thiD).